We begin with the raw amino-acid sequence, 1007 residues long: Protein vav-1 (1007 aa).

Positions 37–151 (CDLWIGCARW…TLSFLSHTKE (115 aa)) constitute a Calponin-homology (CH) domain. An AC region spans residues 151 to 239 (ESLSRGVDPF…ENDLQNTPTL (89 aa)). The tract at residues 153–176 (LSRGVDPFPDTDNNQEGTSNGSEF) is disordered. Residues 163-174 (TDNNQEGTSNGS) are compositionally biased toward polar residues. Y183, Y200, and Y217 each carry phosphotyrosine. The DH domain occupies 240–437 (KRNRCIRELY…EDVCNYINEE (198 aa)). Positions 470-598 (RVNLDGEVKM…WMTALLLSKS (129 aa)) constitute a PH domain. The Phorbol-ester/DAG-type zinc finger occupies 610–664 (NHKVAFHSFRVDVKNPATCDVCDKLMKGLQYQGYKCESCNMSMHKECLGLKKCEA). The SH3 1 domain occupies 688–750 (HEGDIVVANS…HLDHVSQSRT (63 aa)). The interval 778 to 817 (LPNKLLSDGSSRSLSGPHGSRSSRNSSSSTINGSMDSVPR) is disordered. Over residues 782–814 (LLSDGSSRSLSGPHGSRSSRNSSSSTINGSMDS) the composition is skewed to low complexity. An SH2 domain is found at 831–925 (WYMGEMERAK…ALDTCLKNPY (95 aa)). The region spanning 926–991 (SQCKVFKAVH…PLSYVKPYDP (66 aa)) is the SH3 2 domain.

GEF activity is regulated by phosphorylation on tyrosine residues. Strong expression in the pharynx, proximal gonad, spermatheca, intestine and rectal epithelia.

Functionally, acts as a guanine nucleotide exchange factor (GEF) for Rho GTPase. Has a critical roles in the generation of rhythmic behaviors: feeding, defecation and ovulation by dynamically regulating the concentration of intracellular calcium. Plays a role in male tail tip morphogenesis. The sequence is that of Protein vav-1 from Caenorhabditis elegans.